The chain runs to 523 residues: Cysteine-rich secretory protein LCCL domain-containing 1 (523 aa).

The N-terminal stretch at 1–23 (MKYVVQEWLRITTLLFIAQAVSA) is a signal peptide. An SCP domain is found at 66–206 (LDLHNKLRGQ…PKAVYLVCNY (141 aa)). The interval 246 to 298 (ERPYSPHEPEEETNEIERQRSKAQDATAQSRPRTHSPSGSTGSEDSEKNEVIS) is disordered. The span at 269–288 (QDATAQSRPRTHSPSGSTGS) shows a compositional bias: polar residues. 2 LCCL domains span residues 302 to 397 (MSQI…ANSF) and 403 to 505 (TVQA…PGKQ). 4 disulfide bridges follow: Cys-308/Cys-326, Cys-330/Cys-350, Cys-409/Cys-431, and Cys-435/Cys-458.

The protein belongs to the CRISP family.

It is found in the secreted. This chain is Cysteine-rich secretory protein LCCL domain-containing 1 (CRISPLD1), found in Gallus gallus (Chicken).